Reading from the N-terminus, the 214-residue chain is MADS-box protein SOC1 (214 aa).

In terms of domain architecture, MADS-box spans 3–57; the sequence is RGKTQMKRIENATSRQVTFSKRRNGLLKKAFELSVLCDAEVSLIIFSPKGKLYEF. The 91-residue stretch at 87–177 folds into the K-box domain; that stretch reads MQHLKYEAAN…SEKWGSHESE (91 aa). A compositionally biased stretch (basic and acidic residues) spans 162-177; it reads AENEKLSEKWGSHESE. Residues 162-214 form a disordered region; the sequence is AENEKLSEKWGSHESEVWSNKNQESTGRGDEESSPSSEVETQLFIGLPCSSRK. The span at 178–187 shows a compositional bias: polar residues; that stretch reads VWSNKNQEST.

Forms a heterodimer with AGL24 through MADS-box domain. Interacts with AGL15, AGL16 and AGL19. Interacts with OXS3 in the nucleus. In terms of tissue distribution, widely expressed. Not found in the apical meristem of short-day grown plants in vegetative stage.

The protein localises to the nucleus. It is found in the cytoplasm. In terms of biological role, transcription activator active in flowering time control. May integrate signals from the photoperiod, vernalization and autonomous floral induction pathways. Can modulate class B and C homeotic genes expression. When associated with AGL24, mediates effect of gibberellins on flowering under short-day conditions, and regulates the expression of LEAFY (LFY), which links floral induction and floral development. The chain is MADS-box protein SOC1 from Arabidopsis thaliana (Mouse-ear cress).